Reading from the N-terminus, the 684-residue chain is Probable potassium transport system protein Kup (684 aa).

Transmembrane regions (helical) follow at residues 19-39 (ALLV…LYVM), 61-81 (VSLI…LIAL), 104-124 (WLVL…MLTP), 151-171 (QVIW…RFGT), 177-197 (AFGP…FIAL), 223-243 (MGLF…ALYS), 255-275 (LSWP…AVWL), 303-323 (LGAI…LISG), 352-372 (LYIP…IGYF), 381-401 (AYGL…YQYL), 407-427 (PAVI…VFFI), and 433-453 (FLHG…VMYV).

Belongs to the HAK/KUP transporter (TC 2.A.72) family.

The protein resides in the cell membrane. The catalysed reaction is K(+)(in) + H(+)(in) = K(+)(out) + H(+)(out). Transport of potassium into the cell. Likely operates as a K(+):H(+) symporter. The polypeptide is Probable potassium transport system protein Kup (Lacticaseibacillus casei (strain BL23) (Lactobacillus casei)).